A 121-amino-acid chain; its full sequence is Putative viral protein-binding protein C1 (121 aa).

Positions 21-57 (PWDRTRGHPDVPWRNLTSSPTRPLAQPAGSCMPAEPS) are disordered.

Interacts with core protein of hepatitis B virus.

This is Putative viral protein-binding protein C1 from Homo sapiens (Human).